The following is a 263-amino-acid chain: MWELRSASFWRAIFAEFFATLFYVFFGLGASLRWAPGPLHVLQVALAFGLALATLVQTVGHISGAHVNPAVTFAFLVGSQMSLLRAFCYIAAQLLGAVAGAAVLYSVTPPAVRGNLALNTLHAGVSVGQATTVEIFLTLQFVLCIFATYDERRNGRMGSVALAVGFSLTLGHLFGMYYTGAGMNPARSFAPAILTRNFSNHWVYWVGPIIGGGLGSLLYDFLLFPRLKSVSERLSILKGARPSDSNGQPEGTGEPVELKTQAL.

The Cytoplasmic segment spans residues 1-9; that stretch reads MWELRSASF. The chain crosses the membrane as a helical span at residues 10-29; sequence WRAIFAEFFATLFYVFFGLG. At 30-41 the chain is on the extracellular side; sequence ASLRWAPGPLHV. Residues 42 to 59 form a helical membrane-spanning segment; the sequence is LQVALAFGLALATLVQTV. The Cytoplasmic portion of the chain corresponds to 60–61; that stretch reads GH. The discontinuously helical intramembrane region spans 62–77; that stretch reads ISGAHVNPAVTFAFLV. Residues 68 to 70 carry the NPA 1 motif; it reads NPA. Topologically, residues 78–82 are cytoplasmic; sequence GSQMS. Residues 83-106 form a helical membrane-spanning segment; sequence LLRAFCYIAAQLLGAVAGAAVLYS. Residues 107 to 127 are Extracellular-facing; that stretch reads VTPPAVRGNLALNTLHAGVSV. A helical membrane pass occupies residues 128-148; it reads GQATTVEIFLTLQFVLCIFAT. The Cytoplasmic portion of the chain corresponds to 149 to 156; the sequence is YDERRNGR. The helical transmembrane segment at 157–175 threads the bilayer; it reads MGSVALAVGFSLTLGHLFG. The Extracellular segment spans residues 176-178; the sequence is MYY. The segment at residues 179 to 193 is an intramembrane region (discontinuously helical); that stretch reads TGAGMNPARSFAPAI. The NPA 2 signature appears at 184–186; sequence NPA. At 194-200 the chain is on the extracellular side; that stretch reads LTRNFSN. The chain crosses the membrane as a helical span at residues 201 to 222; that stretch reads HWVYWVGPIIGGGLGSLLYDFL. The Cytoplasmic portion of the chain corresponds to 223–263; that stretch reads LFPRLKSVSERLSILKGARPSDSNGQPEGTGEPVELKTQAL. Residues 227 to 237 are interaction with CALM; the sequence is LKSVSERLSIL. Phosphoserine occurs at positions 235, 243, and 245. The segment at 240-263 is disordered; the sequence is ARPSDSNGQPEGTGEPVELKTQAL. Residue Asn-246 is modified to Deamidated asparagine.

The protein belongs to the MIP/aquaporin (TC 1.A.8) family. Homotetramer; each monomer provides an independent water pore. Two homotetramers on opposing membranes can dimerize, forming a cell-cell junction. Interacts with CALM; the calcium-calmodulin/CALM complex interacts with the cytoplasmic domains of two aquaporins, leading to channel closure. Interacts with BFSP1 (via C-terminus); prevents calcium-dependent inhibition of the water channel activity. In terms of processing, subject to partial proteolytic cleavage in the eye lens core. Partial proteolysis promotes interactions between tetramers from adjoining membranes. Post-translationally, fatty acylated at Met-1 and Lys-238. The acyl modifications, in decreasing order of ion abundance, are: oleoyl (C18:1) &gt; palmitoyl (C16:0) &gt; stearoyl (C18:0) &gt; eicosenoyl (C20:1) &gt; dihomo-gamma-linolenoyl (C20:3) &gt; palmitoleoyl (C16:1) &gt; eicosadienoyl (C20:2).

The protein resides in the cell membrane. It is found in the cell junction. It catalyses the reaction H2O(in) = H2O(out). The water channel activity is inhibited by calcium through calmodulin/CALM. In terms of biological role, aquaporins form homotetrameric transmembrane channels, with each monomer independently mediating water transport across the plasma membrane along its osmotic gradient. Specifically expressed in lens fiber cells, this aquaporin is crucial for maintaining lens water homeostasis and transparency. Beyond water permeability, it also acts as a cell-to-cell adhesion molecule, forming thin junctions between lens fiber cells that are essential for maintaining the ordered structure and transparency of the lens. In Mus musculus (Mouse), this protein is Lens fiber major intrinsic protein.